Reading from the N-terminus, the 586-residue chain is Pyruvate kinase (586 aa).

Arg-32 is a binding site for substrate. Positions 34, 36, 66, and 67 each coordinate K(+). 34 to 37 (NFSH) is a binding site for ATP. Positions 73 and 156 each coordinate ATP. Glu-222 is a binding site for Mg(2+). Residues Gly-245, Asp-246, and Thr-278 each coordinate substrate. Residue Asp-246 coordinates Mg(2+).

It belongs to the pyruvate kinase family. This sequence in the C-terminal section; belongs to the PEP-utilizing enzyme family. It depends on Mg(2+) as a cofactor. K(+) serves as cofactor.

The enzyme catalyses pyruvate + ATP = phosphoenolpyruvate + ADP + H(+). Its pathway is carbohydrate degradation; glycolysis; pyruvate from D-glyceraldehyde 3-phosphate: step 5/5. The chain is Pyruvate kinase (pyk) from Staphylococcus saprophyticus subsp. saprophyticus (strain ATCC 15305 / DSM 20229 / NCIMB 8711 / NCTC 7292 / S-41).